The following is an 87-amino-acid chain: HssA/B-like protein 28 (87 aa).

Belongs to the hssA/B family.

The polypeptide is HssA/B-like protein 28 (hssl28) (Dictyostelium discoideum (Social amoeba)).